The primary structure comprises 92 residues: Small ribosomal subunit protein uS19 (92 aa).

It belongs to the universal ribosomal protein uS19 family.

Its function is as follows. Protein S19 forms a complex with S13 that binds strongly to the 16S ribosomal RNA. This Shigella boydii serotype 18 (strain CDC 3083-94 / BS512) protein is Small ribosomal subunit protein uS19.